Here is a 228-residue protein sequence, read N- to C-terminus: PKHD-type hydroxylase Reut_A2877 (228 aa).

A Fe2OG dioxygenase domain is found at Ile-80–Ser-180. Fe cation is bound by residues His-98, Asp-100, and His-161. Residue Arg-171 coordinates 2-oxoglutarate.

Requires Fe(2+) as cofactor. L-ascorbate serves as cofactor.

The protein is PKHD-type hydroxylase Reut_A2877 of Cupriavidus pinatubonensis (strain JMP 134 / LMG 1197) (Cupriavidus necator (strain JMP 134)).